An 831-amino-acid polypeptide reads, in one-letter code: Translation initiation factor IF-2 (831 aa).

Residues 329–499 form the tr-type G domain; it reads TRAPVVTVMG…LLISEMQDLK (171 aa). The segment at 338–345 is G1; it reads GHVDHGKT. 338–345 contacts GTP; it reads GHVDHGKT. The G2 stretch occupies residues 363–367; it reads GITQH. The tract at residues 385 to 388 is G3; it reads DTPG. GTP contacts are provided by residues 385–389 and 439–442; these read DTPGH and NKID. A G4 region spans residues 439–442; it reads NKID. Residues 475–477 are G5; the sequence is SAL.

Belongs to the TRAFAC class translation factor GTPase superfamily. Classic translation factor GTPase family. IF-2 subfamily.

The protein resides in the cytoplasm. Functionally, one of the essential components for the initiation of protein synthesis. Protects formylmethionyl-tRNA from spontaneous hydrolysis and promotes its binding to the 30S ribosomal subunits. Also involved in the hydrolysis of GTP during the formation of the 70S ribosomal complex. The polypeptide is Translation initiation factor IF-2 (infB) (Rickettsia prowazekii (strain Madrid E)).